A 610-amino-acid chain; its full sequence is Propanediol dehydratase-reactivating factor large subunit (610 aa).

11-13 is a binding site for ATP; that stretch reads NSS. 3 residues coordinate Mg(2+): Thr105, Asp166, and Asp183. Residues 459-462, 557-558, and Arg591 each bind ATP; these read EEIK and GS.

It belongs to the DdrA/PduG family. As to quaternary structure, forms a heterotetramer PduG(2)/PduH(2). Requires Mg(2+) as cofactor.

It localises to the bacterial microcompartment. The enzyme catalyses ATP + H2O = ADP + phosphate + H(+). The protein operates within polyol metabolism; 1,2-propanediol degradation. Large subunit of the propanediol dehydratase-reactivating factor (DDR), which reactivates suicidally inhibited adenosylcobalamin-dependent propanediol dehydratase (diol dehydratase, DDH) found in the bacterial microcompartment (BMC) dedicated to 1,2-propanediol (1,2-PD) degradation. Reactivates inactivated DDH in the presence of ATP, Mg(2+) and free adenosylcobalamin (AdoCbl), by mediating the exchange of the tightly bound damaged cofactor AdoCbl for a free intact one. This subunit contains the adenosine nucleotide binding site. In terms of biological role, the 1,2-PD-specific bacterial microcompartment (BMC) concentrates low levels of 1,2-PD catabolic enzymes, concentrates volatile reaction intermediates thus enhancing pathway flux and keeps the level of toxic, mutagenic propionaldehyde low. In Salmonella typhimurium (strain LT2 / SGSC1412 / ATCC 700720), this protein is Propanediol dehydratase-reactivating factor large subunit.